The chain runs to 795 residues: Phenylalanine--tRNA ligase beta subunit (795 aa).

Residues 39-148 enclose the tRNA-binding domain; the sequence is AGDFSGVVVG…QNAPVGTNLR (110 aa). Positions 401–476 constitute a B5 domain; that stretch reads PKLNQVSLRR…RIYGYNSIPN (76 aa). 4 residues coordinate Mg(2+): aspartate 454, aspartate 460, glutamate 463, and glutamate 464. One can recognise an FDX-ACB domain in the interval 701 to 794; it reads SRFPANRRDL…LKQRFNAYLR (94 aa).

This sequence belongs to the phenylalanyl-tRNA synthetase beta subunit family. Type 1 subfamily. Tetramer of two alpha and two beta subunits. Mg(2+) serves as cofactor.

Its subcellular location is the cytoplasm. The catalysed reaction is tRNA(Phe) + L-phenylalanine + ATP = L-phenylalanyl-tRNA(Phe) + AMP + diphosphate + H(+). This Pasteurella multocida (strain Pm70) protein is Phenylalanine--tRNA ligase beta subunit (pheT).